Reading from the N-terminus, the 149-residue chain is Stathmin (149 aa).

N-acetylalanine is present on Ala-2. Position 4 is a phosphoserine (Ser-4). In terms of domain architecture, SLD spans 4 to 145 (SDIQVKELEK…NKESKDPADE (142 aa)). Lys-9 carries the N6-acetyllysine modification. Ser-16 is modified (phosphoserine). Residue Ser-25 is modified to Phosphoserine; by CDK1, MAPK1 and MAPK3. An N6-methyllysine modification is found at Lys-29. Position 31 is a phosphoserine (Ser-31). Phosphoserine; by CDK1, MAPK1 and MAPK3 is present on Ser-38. Residues 41–140 (KKKDLSLEEI…EEVRKNKESK (100 aa)) are a coiled coil. Ser-63 bears the Phosphoserine; by PKA mark. N6-acetyllysine is present on residues Lys-100 and Lys-119. A compositionally biased stretch (basic and acidic residues) spans 121–143 (ERLREKDKHIEEVRKNKESKDPA). The disordered stretch occupies residues 121–149 (ERLREKDKHIEEVRKNKESKDPADETEAD).

The protein belongs to the stathmin family. As to quaternary structure, binds to two alpha/beta-tubulin heterodimers. Interacts with KIST. Many different phosphorylated forms are observed depending on specific combinations among the sites which can be phosphorylated. MAPK is responsible for the phosphorylation of stathmin in response to NGF. Phosphorylation at Ser-16 seems to be required for neuron polarization.

The protein resides in the cytoplasm. It localises to the cytoskeleton. Involved in the regulation of the microtubule (MT) filament system by destabilizing microtubules. Prevents assembly and promotes disassembly of microtubules. Its phosphorylation at Ser-16 may be required for axon formation during neurogenesis. Involved in the control of the learned and innate fear. In Bos taurus (Bovine), this protein is Stathmin (STMN1).